A 269-amino-acid polypeptide reads, in one-letter code: Eukaryotic translation initiation factor 3 subunit G-1 (269 aa).

An RRM domain is found at 188 to 266 (AAIRISNLSE…LILSVEWSKP (79 aa)).

This sequence belongs to the eIF-3 subunit G family. As to quaternary structure, component of the eukaryotic translation initiation factor 3 (eIF-3) complex. The eIF-3 complex interacts with pix.

The protein resides in the cytoplasm. In terms of biological role, RNA-binding component of the eukaryotic translation initiation factor 3 (eIF-3) complex, which is involved in protein synthesis of a specialized repertoire of mRNAs and, together with other initiation factors, stimulates binding of mRNA and methionyl-tRNAi to the 40S ribosome. The eIF-3 complex specifically targets and initiates translation of a subset of mRNAs involved in cell proliferation. This subunit can bind 18S rRNA. The protein is Eukaryotic translation initiation factor 3 subunit G-1 of Drosophila willistoni (Fruit fly).